Reading from the N-terminus, the 550-residue chain is CTP synthase (550 aa).

An amidoligase domain region spans residues 1–265 (MTKFIFVTGG…DEIVVEQLGL (265 aa)). Ser13 lines the CTP pocket. Ser13 is a UTP binding site. 14 to 19 (SLGKGI) provides a ligand contact to ATP. Residue Tyr54 coordinates L-glutamine. Residue Asp71 participates in ATP binding. Residues Asp71 and Glu139 each contribute to the Mg(2+) site. CTP is bound by residues 146–148 (DIE), 186–191 (KTKPTQ), and Lys222. UTP contacts are provided by residues 186-191 (KTKPTQ) and Lys222. A Glutamine amidotransferase type-1 domain is found at 290 to 541 (TITLVGKYVD…IRAAAEHRRR (252 aa)). Gly351 provides a ligand contact to L-glutamine. The active-site Nucleophile; for glutamine hydrolysis is the Cys378. L-glutamine is bound by residues 379 to 382 (LGMQ), Glu402, and Arg469. Active-site residues include His514 and Glu516.

The protein belongs to the CTP synthase family. In terms of assembly, homotetramer.

The catalysed reaction is UTP + L-glutamine + ATP + H2O = CTP + L-glutamate + ADP + phosphate + 2 H(+). It catalyses the reaction L-glutamine + H2O = L-glutamate + NH4(+). It carries out the reaction UTP + NH4(+) + ATP = CTP + ADP + phosphate + 2 H(+). It participates in pyrimidine metabolism; CTP biosynthesis via de novo pathway; CTP from UDP: step 2/2. With respect to regulation, allosterically activated by GTP, when glutamine is the substrate; GTP has no effect on the reaction when ammonia is the substrate. The allosteric effector GTP functions by stabilizing the protein conformation that binds the tetrahedral intermediate(s) formed during glutamine hydrolysis. Inhibited by the product CTP, via allosteric rather than competitive inhibition. In terms of biological role, catalyzes the ATP-dependent amination of UTP to CTP with either L-glutamine or ammonia as the source of nitrogen. Regulates intracellular CTP levels through interactions with the four ribonucleotide triphosphates. This is CTP synthase from Nitrosococcus oceani (strain ATCC 19707 / BCRC 17464 / JCM 30415 / NCIMB 11848 / C-107).